Here is an 81-residue protein sequence, read N- to C-terminus: Small ribosomal subunit protein bS18 (81 aa).

The protein belongs to the bacterial ribosomal protein bS18 family. Part of the 30S ribosomal subunit. Forms a tight heterodimer with protein bS6.

Functionally, binds as a heterodimer with protein bS6 to the central domain of the 16S rRNA, where it helps stabilize the platform of the 30S subunit. The sequence is that of Small ribosomal subunit protein bS18 from Parvibaculum lavamentivorans (strain DS-1 / DSM 13023 / NCIMB 13966).